The primary structure comprises 204 residues: UPF0637 protein SAS1041 (204 aa).

Belongs to the UPF0637 family.

The sequence is that of UPF0637 protein SAS1041 from Staphylococcus aureus (strain MSSA476).